The chain runs to 209 residues: Ribosomal RNA large subunit methyltransferase E (209 aa).

The S-adenosyl-L-methionine site is built by Gly63, Trp65, Asp83, Asp99, and Asp124. Lys164 (proton acceptor) is an active-site residue.

This sequence belongs to the class I-like SAM-binding methyltransferase superfamily. RNA methyltransferase RlmE family.

It localises to the cytoplasm. The enzyme catalyses uridine(2552) in 23S rRNA + S-adenosyl-L-methionine = 2'-O-methyluridine(2552) in 23S rRNA + S-adenosyl-L-homocysteine + H(+). In terms of biological role, specifically methylates the uridine in position 2552 of 23S rRNA at the 2'-O position of the ribose in the fully assembled 50S ribosomal subunit. The sequence is that of Ribosomal RNA large subunit methyltransferase E from Klebsiella pneumoniae (strain 342).